A 742-amino-acid chain; its full sequence is ATP-dependent RNA helicase DBP7 (742 aa).

The segment at 45 to 100 (GKTVSRKRKANTTGDEGIIPGRGENSIKKLHKESSYSSEEQEKYKGRNAHNTQGRT) is disordered. The Q motif motif lies at 143-172 (DQFASLGVSSLLVSHLEQKMRIKKPTSIQK). Residues 178 to 372 (IIGNAGKNDF…NVALKDYKLI (195 aa)) enclose the Helicase ATP-binding domain. 191-198 (AQTGSGKT) is a binding site for ATP. A DEGD box motif is present at residues 307 to 310 (DEGD). Positions 405-605 (TLAATLNNIT…ILMPAFKDVN (201 aa)) constitute a Helicase C-terminal domain. Residues 701 to 726 (AMGLQSSKDGNSEKKPTKENSKNKMF) are disordered. Residues 710-722 (GNSEKKPTKENSK) show a composition bias toward basic and acidic residues.

This sequence belongs to the DEAD box helicase family. DDX31/DBP7 subfamily.

It is found in the nucleus. The protein localises to the nucleolus. The enzyme catalyses ATP + H2O = ADP + phosphate + H(+). Its function is as follows. ATP-binding RNA helicase involved in the biogenesis of 60S ribosomal subunits and is required for the normal formation of 25S and 5.8S rRNAs. This chain is ATP-dependent RNA helicase DBP7 (DBP7), found in Saccharomyces cerevisiae (strain ATCC 204508 / S288c) (Baker's yeast).